We begin with the raw amino-acid sequence, 529 residues long: Bifunctional purine biosynthesis protein PurH (529 aa).

Positions 3–149 (DRIPLKRALI…KNHAFVTVVV (147 aa)) constitute an MGS-like domain.

Belongs to the PurH family.

The catalysed reaction is (6R)-10-formyltetrahydrofolate + 5-amino-1-(5-phospho-beta-D-ribosyl)imidazole-4-carboxamide = 5-formamido-1-(5-phospho-D-ribosyl)imidazole-4-carboxamide + (6S)-5,6,7,8-tetrahydrofolate. It carries out the reaction IMP + H2O = 5-formamido-1-(5-phospho-D-ribosyl)imidazole-4-carboxamide. It functions in the pathway purine metabolism; IMP biosynthesis via de novo pathway; 5-formamido-1-(5-phospho-D-ribosyl)imidazole-4-carboxamide from 5-amino-1-(5-phospho-D-ribosyl)imidazole-4-carboxamide (10-formyl THF route): step 1/1. The protein operates within purine metabolism; IMP biosynthesis via de novo pathway; IMP from 5-formamido-1-(5-phospho-D-ribosyl)imidazole-4-carboxamide: step 1/1. This Paracoccus denitrificans (strain Pd 1222) protein is Bifunctional purine biosynthesis protein PurH.